The sequence spans 218 residues: Twisted gastrulation protein homolog 1-B (218 aa).

A signal peptide spans 1–25 (MKPSFLHIPAAALLLCSLWILPIHC). N-linked (GlcNAc...) asparagine glycosylation is found at Asn52, Asn81, and Asn147.

The protein belongs to the twisted gastrulation protein family. Binds directly to bmp2, bmp4 and bmp7 and can form a ternary complex with bmps and chordin, thus preventing the binding of bmps to their cell surface receptors.

The protein resides in the secreted. Its function is as follows. Involved in dorsal-ventral patterning, permitting peak BMP signaling by antagonizing the residual anti-BMP activity of the cleavage products of chrd. Functions to promote the formation of ventral mesoderm by increasing the activity of bmp7 and other BMPS. Seems to antagonize BMP signaling by forming ternary complexes with chrd and BMPs, thereby preventing BMPs from binding to their receptors. In addition to the anti-BMP function, also has pro-BMP activity, partly mediated by cleavage and degradation of chrd, which releases BMPs from ternary complexes. May be an important modulator of BMP-regulated cartilage development and chondrocyte differentiation. The sequence is that of Twisted gastrulation protein homolog 1-B (twsg1-b) from Xenopus laevis (African clawed frog).